The chain runs to 62 residues: UPF0337 protein mll8179 (62 aa).

The disordered stretch occupies residues 1–42 (MRNMVNKDQVAGLAKQLKGSVKQAAGKATGNRRTQAEGMADK).

The protein belongs to the UPF0337 (CsbD) family.

The polypeptide is UPF0337 protein mll8179 (Mesorhizobium japonicum (strain LMG 29417 / CECT 9101 / MAFF 303099) (Mesorhizobium loti (strain MAFF 303099))).